The primary structure comprises 218 residues: Pyridoxine/pyridoxamine 5'-phosphate oxidase (218 aa).

Substrate is bound by residues 14-17 and K72; that span reads RREY. Residues 67 to 72, 82 to 83, R88, K89, and Q111 contribute to the FMN site; these read RIVLLK and YT. Substrate-binding residues include Y129, R133, and S137. Residues 146 to 147 and W191 contribute to the FMN site; that span reads QS. 197–199 serves as a coordination point for substrate; it reads RLH. R201 lines the FMN pocket.

This sequence belongs to the pyridoxamine 5'-phosphate oxidase family. In terms of assembly, homodimer. FMN is required as a cofactor.

The catalysed reaction is pyridoxamine 5'-phosphate + O2 + H2O = pyridoxal 5'-phosphate + H2O2 + NH4(+). It catalyses the reaction pyridoxine 5'-phosphate + O2 = pyridoxal 5'-phosphate + H2O2. It functions in the pathway cofactor metabolism; pyridoxal 5'-phosphate salvage; pyridoxal 5'-phosphate from pyridoxamine 5'-phosphate: step 1/1. It participates in cofactor metabolism; pyridoxal 5'-phosphate salvage; pyridoxal 5'-phosphate from pyridoxine 5'-phosphate: step 1/1. Its function is as follows. Catalyzes the oxidation of either pyridoxine 5'-phosphate (PNP) or pyridoxamine 5'-phosphate (PMP) into pyridoxal 5'-phosphate (PLP). The protein is Pyridoxine/pyridoxamine 5'-phosphate oxidase of Escherichia coli O45:K1 (strain S88 / ExPEC).